Here is a 506-residue protein sequence, read N- to C-terminus: Methylthioalkylmalate synthase 2, chloroplastic (506 aa).

Residues 1-49 (MASSLLTSSGMIPTTGSTVVGRSVLPFQSSLHSLRLTHSYKNPALFISC) constitute a chloroplast transit peptide. In terms of domain architecture, Pyruvate carboxyltransferase spans 85–359 (VRVFDTTLRD…YTRIDTRQIM (275 aa)).

The protein belongs to the alpha-IPM synthase/homocitrate synthase family.

The protein resides in the plastid. It is found in the chloroplast. It carries out the reaction an omega-(methylsulfanyl)-2-oxoalkanoate + acetyl-CoA + H2O = a 2-(omega-methylsulfanyl)alkylmalate + CoA + H(+). Its function is as follows. Catalyzes only the first methionine chain elongation cycle. The protein is Methylthioalkylmalate synthase 2, chloroplastic (MAM2) of Arabidopsis thaliana (Mouse-ear cress).